Consider the following 148-residue polypeptide: uncharacterized protein (148 aa).

A disordered region spans residues 83-148; sequence QPAVIPPVKA…TKKSNKKTRS (66 aa). Basic residues-rich tracts occupy residues 92–103 and 113–124; these read AKPKATKKKTPV and KQTKPKQSKPKS.

This is an uncharacterized protein from Mycoplasma genitalium (strain ATCC 33530 / DSM 19775 / NCTC 10195 / G37) (Mycoplasmoides genitalium).